The chain runs to 316 residues: RING finger protein 148 (316 aa).

The N-terminal stretch at 1–12 (MLLCVSCLSVNG) is a signal peptide. Asparagine 56 is a glycosylation site (N-linked (GlcNAc...) asparagine). Residues 84–178 (VSGAVVLPEG…GNLKGMELLH (95 aa)) enclose the PA domain. Transmembrane regions (helical) follow at residues 173 to 193 (GMEL…IEVG) and 204 to 224 (VMSL…YCAW). An RING-type; atypical zinc finger spans residues 269–310 (CVVCFDMYKAQDVIRILTCKHFFHKTCIDPWLLAHRTCPMCK).

It localises to the membrane. This chain is RING finger protein 148 (Rnf148), found in Mus musculus (Mouse).